We begin with the raw amino-acid sequence, 859 residues long: ATP-dependent RNA helicase DDX24 (859 aa).

Lys17 carries the post-translational modification N6-acetyllysine. Ser60 is subject to Phosphoserine. Positions 61 to 175 (PAKNPSSLFS…SQSTAAKVPK (115 aa)) are disordered. Lys71 bears the N6-acetyllysine mark. Phosphoserine is present on residues Ser82 and Ser94. Residues 82 to 91 (SEEEEEEEGE) are compositionally biased toward acidic residues. The span at 95–105 (PKKKIKLKKSK) shows a compositional bias: basic residues. The span at 106 to 115 (NVATEGTSTQ) shows a compositional bias: polar residues. The Q motif motif lies at 192–220 (SAWKDLFVPRPVLRALSFLGFSAPTPIQV). The 305-residue stretch at 224–528 (APAIRDKLDI…RILHKKHTKK (305 aa)) folds into the Helicase ATP-binding domain. Position 237 to 244 (237 to 244 (AETGSGKT)) interacts with ATP. The tract at residues 262-374 (NAAPPPSNTE…QTGNLKQELD (113 aa)) is disordered. Positions 277–293 (TRPEAGAETRSPGKAEA) are enriched in basic and acidic residues. Phosphoserine occurs at positions 287 and 295. Positions 294–304 (ESDALPDDTVI) are enriched in acidic residues. Thr302 is subject to Phosphothreonine. Residue Lys370 forms a Glycyl lysine isopeptide (Lys-Gly) (interchain with G-Cter in SUMO2) linkage. The DEAD box signature appears at 471–474 (DEAD). The 146-residue stretch at 578–723 (YLYYFLMQYP…LFPVQTKYMD (146 aa)) folds into the Helicase C-terminal domain. Glycyl lysine isopeptide (Lys-Gly) (interchain with G-Cter in SUMO2) cross-links involve residues Lys624, Lys808, and Lys825. 2 stretches are compositionally biased toward polar residues: residues 799-814 (PLFTESQKTKYPTQSG) and 823-834 (PSKSESALSCLS). The segment at 799 to 859 (PLFTESQKTK…EQPQPSTSAN (61 aa)) is disordered.

This sequence belongs to the DEAD box helicase family. DDX24/MAK5 subfamily. As to quaternary structure, interacts with FADD. Interacts with RIPK1; this interaction disrupts RLR signaling activation of IFN-dependent transcription factor IRF7. Interacts with NIP7. Interacts with EP300; this interaction prevents TP53 acetylation mediated by EP300. In terms of processing, ubiquitinated by MDM2 without targeting DDX24 for proteasomal degradation. Instead, polyubiquitylated DDX24 promotes interaction with NIP7, a component of pre-rRNP processing complex, and associates with pre-rRNA molecules and pre-ribosomal particles.

It is found in the cytoplasm. The protein resides in the nucleus. The enzyme catalyses ATP + H2O = ADP + phosphate + H(+). ATP-dependent RNA helicase that plays a role in various aspects of RNA metabolism including pre-mRNA splicing and is thereby involved in different biological processes such as cell cycle regulation or innate immunity. Plays an inhibitory role in TP53 transcriptional activity and subsequently in TP53 controlled cell growth arrest and senescence by inhibiting its EP300 mediated acetylation. Negatively regulates cytosolic RNA-mediated innate immune signaling at least in part by affecting RIPK1/IRF7 interactions. Alternatively, possesses antiviral activity by recognizing gammaherpesvirus transcripts in the context of lytic reactivation. Plays an essential role in cell cycle regulation in vascular smooth muscle cells by interacting with and regulating FANCA (Fanconi anemia complementation group A) mRNA. This is ATP-dependent RNA helicase DDX24 (DDX24) from Pongo abelii (Sumatran orangutan).